The chain runs to 209 residues: Large ribosomal subunit protein uL3 (209 aa).

Residues 133–153 form a disordered region; that stretch reads THGNSLSHRVPGSIGQNQTPG. Glutamine 150 carries the N5-methylglutamine modification.

The protein belongs to the universal ribosomal protein uL3 family. As to quaternary structure, part of the 50S ribosomal subunit. Forms a cluster with proteins L14 and L19. Post-translationally, methylated by PrmB.

Functionally, one of the primary rRNA binding proteins, it binds directly near the 3'-end of the 23S rRNA, where it nucleates assembly of the 50S subunit. The sequence is that of Large ribosomal subunit protein uL3 from Pectobacterium carotovorum subsp. carotovorum (strain PC1).